We begin with the raw amino-acid sequence, 332 residues long: Tyrosine--tRNA ligase (332 aa).

Residues tyrosine 32, tyrosine 156, glutamine 160, aspartate 163, and glutamine 178 each contribute to the L-tyrosine site. Residues 219-223 carry the 'KMSKS' region motif; that stretch reads KMSKS. Lysine 222 lines the ATP pocket.

It belongs to the class-I aminoacyl-tRNA synthetase family. TyrS type 4 subfamily. As to quaternary structure, homodimer.

Its subcellular location is the cytoplasm. It carries out the reaction tRNA(Tyr) + L-tyrosine + ATP = L-tyrosyl-tRNA(Tyr) + AMP + diphosphate + H(+). Functionally, catalyzes the attachment of tyrosine to tRNA(Tyr) in a two-step reaction: tyrosine is first activated by ATP to form Tyr-AMP and then transferred to the acceptor end of tRNA(Tyr). This is Tyrosine--tRNA ligase from Thermoplasma acidophilum (strain ATCC 25905 / DSM 1728 / JCM 9062 / NBRC 15155 / AMRC-C165).